The chain runs to 345 residues: Succinylglutamate desuccinylase (345 aa).

Zn(2+) is bound by residues His64, Glu67, and His161. Glu225 is a catalytic residue.

It belongs to the AspA/AstE family. Succinylglutamate desuccinylase subfamily. Zn(2+) serves as cofactor.

It catalyses the reaction N-succinyl-L-glutamate + H2O = L-glutamate + succinate. It functions in the pathway amino-acid degradation; L-arginine degradation via AST pathway; L-glutamate and succinate from L-arginine: step 5/5. Functionally, transforms N(2)-succinylglutamate into succinate and glutamate. This chain is Succinylglutamate desuccinylase, found in Shewanella piezotolerans (strain WP3 / JCM 13877).